A 200-amino-acid chain; its full sequence is Anthranilate synthase component 2, pyocyanine specific (200 aa).

The 194-residue stretch at 2 to 195 (RITLLDNFDS…LLWCGALAVR (194 aa)) folds into the Glutamine amidotransferase type-1 domain. L-glutamine is bound at residue 56-58 (GPG). The active-site Nucleophile; for GATase activity is the Cys-83. Residues Gln-87 and 133–134 (SL) contribute to the L-glutamine site. Residues His-169 and Glu-171 each act as for GATase activity in the active site.

Heterotetramer consisting of two non-identical subunits: a beta subunit (PhnB) and a large alpha subunit (PhnA).

The catalysed reaction is chorismate + L-glutamine = anthranilate + pyruvate + L-glutamate + H(+). Its pathway is secondary metabolite biosynthesis; pyocyanine biosynthesis. Part of a heterotetrameric complex that catalyzes the two-step biosynthesis of anthranilate, a precursor for Pseudomonas quinolone signal (2-heptyl-3-hydroxy-4-quinolone; PQS) production which is required to induce the genes for the biosynthesis of the virulence factor pyocyanine (PCN), a characteristic blue-green phenazine pigment produced by P.aeruginosa. In the first step, the glutamine-binding beta subunit (PhnB) of anthranilate synthase (AS) provides the glutamine amidotransferase activity which generates ammonia as a substrate that, along with chorismate, is used in the second step, catalyzed by the large alpha subunit of AS (PhnA) to produce anthranilate. The chain is Anthranilate synthase component 2, pyocyanine specific from Pseudomonas aeruginosa (strain ATCC 15692 / DSM 22644 / CIP 104116 / JCM 14847 / LMG 12228 / 1C / PRS 101 / PAO1).